The primary structure comprises 414 residues: Esterase FrsA (414 aa).

It belongs to the FrsA family.

It catalyses the reaction a carboxylic ester + H2O = an alcohol + a carboxylate + H(+). In terms of biological role, catalyzes the hydrolysis of esters. The sequence is that of Esterase FrsA from Salmonella typhi.